We begin with the raw amino-acid sequence, 177 residues long: SKP1-like protein 15 (177 aa).

The tract at residues 108–167 is interaction with the F-box domain of F-box proteins; sequence ILAANYLNVEGLLGLTCQTVADYIKDKTPEEVRELFNIENDFTHEEEEEAIRKENAWAFE.

The protein belongs to the SKP1 family. In terms of assembly, part of a SCF (SKP1-cullin-F-box) protein ligase complex. In terms of tissue distribution, expressed at low levels in seedlings and leaves.

Its subcellular location is the nucleus. It participates in protein modification; protein ubiquitination. In terms of biological role, involved in ubiquitination and subsequent proteasomal degradation of target proteins. Together with CUL1, RBX1 and a F-box protein, it forms a SCF E3 ubiquitin ligase complex. The functional specificity of this complex depends on the type of F-box protein. In the SCF complex, it serves as an adapter that links the F-box protein to CUL1. This Arabidopsis thaliana (Mouse-ear cress) protein is SKP1-like protein 15 (ASK15).